A 454-amino-acid chain; its full sequence is Zinc finger CCCH domain-containing protein 66 (454 aa).

Gly residues predominate over residues 1–23; it reads MAAGAGAGGGGGEGDSNGGGTSP. Positions 1 to 30 are disordered; sequence MAAGAGAGGGGGEGDSNGGGTSPGGVSAAA. C3H1-type zinc fingers lie at residues 66 to 94, 111 to 139, 157 to 185, 318 to 346, and 364 to 392; these read RIGE…HPPN, RVGQ…HPRE, RPNE…HPQP, RPDQ…HPKE, and RPGE…HPMG. The segment at 405–454 is disordered; the sequence is DVSSMHYQLSPSPGHPGILLDGGSGRSHRVPQSDSQQIPSGDGNAEREAS. Residues 434 to 443 are compositionally biased toward polar residues; that stretch reads VPQSDSQQIP.

The protein is Zinc finger CCCH domain-containing protein 66 of Oryza sativa subsp. japonica (Rice).